Consider the following 167-residue polypeptide: MLVIHQRLPARSPRWDEELHLTYEARSKSRLRCFAASGEEVGLFLERGQPPLADGDCLEARDGRLVRVVARSERLLHVTCASPLELTRAAYHLGNRHVALQVGDGWLRLLDDYVLKAMLEQLGATVEAIEAPFQPEHGAYGGGHHHSHHGEAEFNYAPRLHQFGVRR.

It belongs to the UreE family.

The protein resides in the cytoplasm. Its function is as follows. Involved in urease metallocenter assembly. Binds nickel. Probably functions as a nickel donor during metallocenter assembly. This Pseudomonas aeruginosa (strain LESB58) protein is Urease accessory protein UreE.